A 469-amino-acid chain; its full sequence is Sulfate adenylyltransferase subunit 1 (469 aa).

Positions 22–224 (KDLMRFITCG…NMTWYPGSPL (203 aa)) constitute a tr-type G domain. The tract at residues 31–38 (GSVDDGKS) is G1. 31–38 (GSVDDGKS) is a GTP binding site. Residues 89 to 93 (GITID) are G2. Residues 110–113 (DTPG) form a G3 region. Residues 110–114 (DTPGH) and 165–168 (NKMD) contribute to the GTP site. The segment at 165–168 (NKMD) is G4. Positions 202-204 (SAL) are G5.

The protein belongs to the TRAFAC class translation factor GTPase superfamily. Classic translation factor GTPase family. CysN/NodQ subfamily. In terms of assembly, heterodimer composed of CysD, the smaller subunit, and CysN.

It carries out the reaction sulfate + ATP + H(+) = adenosine 5'-phosphosulfate + diphosphate. Its pathway is sulfur metabolism; hydrogen sulfide biosynthesis; sulfite from sulfate: step 1/3. Functionally, with CysD forms the ATP sulfurylase (ATPS) that catalyzes the adenylation of sulfate producing adenosine 5'-phosphosulfate (APS) and diphosphate, the first enzymatic step in sulfur assimilation pathway. APS synthesis involves the formation of a high-energy phosphoric-sulfuric acid anhydride bond driven by GTP hydrolysis by CysN coupled to ATP hydrolysis by CysD. The chain is Sulfate adenylyltransferase subunit 1 from Psychromonas ingrahamii (strain DSM 17664 / CCUG 51855 / 37).